Reading from the N-terminus, the 250-residue chain is MWNNVRQLNLAASALYALLLLVLAAAGCYWLIQRPAFALREIRIDGDTEHINAPTVRAGVVGRLKGNFFTVDLDLARVAFEQMPWVRHASVRRVWPNALAVTLEEYKPLGTWGNDQLVSVDGELFTANQGELDAELPSFDGPEGSAKEVVARYRDFAKWFAPIHATPEEVTLSPRYAWTVKLSNGMQVELGRERNSDTLPDRIQRLVAAWPSVTQRWGGDIEYADLRYPNGFAIRAAGMRFLTDTDKGKK.

Over 1–11 the chain is Cytoplasmic; that stretch reads MWNNVRQLNLA. Residues 12–32 traverse the membrane as a helical segment; sequence ASALYALLLLVLAAAGCYWLI. Residues 33–250 lie on the Periplasmic side of the membrane; sequence QRPAFALREI…FLTDTDKGKK (218 aa). The region spanning 37 to 106 is the POTRA domain; it reads FALREIRIDG…NALAVTLEEY (70 aa).

This sequence belongs to the FtsQ/DivIB family. FtsQ subfamily. In terms of assembly, part of a complex composed of FtsB, FtsL and FtsQ.

Its subcellular location is the cell inner membrane. Essential cell division protein. May link together the upstream cell division proteins, which are predominantly cytoplasmic, with the downstream cell division proteins, which are predominantly periplasmic. May control correct divisome assembly. The protein is Cell division protein FtsQ of Burkholderia pseudomallei (strain K96243).